The following is an 82-amino-acid chain: Probable [Fe-S]-dependent transcriptional repressor (82 aa).

4 residues coordinate iron-sulfur cluster: Cys56, Cys61, Cys64, and Cys71.

Belongs to the FeoC family.

May function as a transcriptional regulator that controls feoABC expression. The protein is Probable [Fe-S]-dependent transcriptional repressor of Yersinia enterocolitica serotype O:8 / biotype 1B (strain NCTC 13174 / 8081).